A 654-amino-acid chain; its full sequence is Marinolic acid--CoA ligase (654 aa).

It belongs to the ATP-dependent AMP-binding enzyme family.

It catalyses the reaction ATP + a marinolic acid + CoA = AMP + diphosphate + a marinoloyl-CoA.. It carries out the reaction ATP + a pseudomonic acid + CoA = AMP + diphosphate + a pseudomonoyl-CoA.. The enzyme catalyses marinolate C + ATP + CoA = marinoloyl-CoA C + AMP + diphosphate. The catalysed reaction is pseudomonate C + ATP + CoA = pseudomonoyl-CoA C + AMP + diphosphate. The protein operates within antibiotic biosynthesis. In terms of biological role, acyl-CoA ligase that catalyzes the CoA acylation of pseudomonate C, leading to the formation of pseudomonoyl-CoA C (PAC-CoA). Also shows high activity with pseudomonoyl-CoA A as substrate. In addition, can activate acetic, octanoic, 2,4-dodecadienoic and 2,4-decadienoic acids, although with much lower activity. In vivo, is probably involved in the biosynthesis of thiomarinol, a naturally occurring double-headed antibiotic. The protein is Marinolic acid--CoA ligase of Pseudoalteromonas sp. (strain SANK 73390).